The sequence spans 155 residues: S-ribosylhomocysteine lyase (155 aa).

Fe cation contacts are provided by His58, His62, and Cys125.

It belongs to the LuxS family. In terms of assembly, homodimer. It depends on Fe cation as a cofactor.

It catalyses the reaction S-(5-deoxy-D-ribos-5-yl)-L-homocysteine = (S)-4,5-dihydroxypentane-2,3-dione + L-homocysteine. Functionally, involved in the synthesis of autoinducer 2 (AI-2) which is secreted by bacteria and is used to communicate both the cell density and the metabolic potential of the environment. The regulation of gene expression in response to changes in cell density is called quorum sensing. Catalyzes the transformation of S-ribosylhomocysteine (RHC) to homocysteine (HC) and 4,5-dihydroxy-2,3-pentadione (DPD). The sequence is that of S-ribosylhomocysteine lyase from Helicobacter pylori (strain Shi470).